Here is a 64-residue protein sequence, read N- to C-terminus: MAKRDQLTGKGPLSGNTRSHAMNHSKRRWNVNLQKATIKTENGSQRVLVSAKTLKTLKKHNLLA.

The disordered stretch occupies residues 1–27; the sequence is MAKRDQLTGKGPLSGNTRSHAMNHSKR.

It belongs to the bacterial ribosomal protein bL28 family.

The polypeptide is Large ribosomal subunit protein bL28 (Ureaplasma parvum serovar 3 (strain ATCC 27815 / 27 / NCTC 11736)).